A 224-amino-acid chain; its full sequence is Phosphoribosylformylglycinamidine synthase subunit PurQ (224 aa).

A Glutamine amidotransferase type-1 domain is found at 4–224 (RIGVVTFPGT…YSALDAVLTG (221 aa)). Cys-87 acts as the Nucleophile in catalysis. Active-site residues include His-195 and Glu-197.

As to quaternary structure, part of the FGAM synthase complex composed of 1 PurL, 1 PurQ and 2 PurS subunits.

It is found in the cytoplasm. It catalyses the reaction N(2)-formyl-N(1)-(5-phospho-beta-D-ribosyl)glycinamide + L-glutamine + ATP + H2O = 2-formamido-N(1)-(5-O-phospho-beta-D-ribosyl)acetamidine + L-glutamate + ADP + phosphate + H(+). The enzyme catalyses L-glutamine + H2O = L-glutamate + NH4(+). The protein operates within purine metabolism; IMP biosynthesis via de novo pathway; 5-amino-1-(5-phospho-D-ribosyl)imidazole from N(2)-formyl-N(1)-(5-phospho-D-ribosyl)glycinamide: step 1/2. Its function is as follows. Part of the phosphoribosylformylglycinamidine synthase complex involved in the purines biosynthetic pathway. Catalyzes the ATP-dependent conversion of formylglycinamide ribonucleotide (FGAR) and glutamine to yield formylglycinamidine ribonucleotide (FGAM) and glutamate. The FGAM synthase complex is composed of three subunits. PurQ produces an ammonia molecule by converting glutamine to glutamate. PurL transfers the ammonia molecule to FGAR to form FGAM in an ATP-dependent manner. PurS interacts with PurQ and PurL and is thought to assist in the transfer of the ammonia molecule from PurQ to PurL. The polypeptide is Phosphoribosylformylglycinamidine synthase subunit PurQ (Mycobacterium bovis (strain ATCC BAA-935 / AF2122/97)).